We begin with the raw amino-acid sequence, 180 residues long: MSGVVFPGQAPVDLDIYQSSYMIDYKPYGKHKYARVTSEVQAKLDTQLRDKEFYRPTPSPNPKLEDGYPAFKRPHMTAKDLGQPGFFPPQGRVGPVEDEWRFTSTCPSVYPASHALYLAHGDPNRIQQSADFPCLLEPEHQPAPDVGKGYFLLPGCACTYHCTVKVPILNRWGPLMPFYQ.

In terms of assembly, microtubule inner protein component of sperm flagellar doublet microtubules.

It localises to the nucleus. The protein resides in the cytoplasm. Its subcellular location is the cytoskeleton. The protein localises to the flagellum axoneme. Microtubule inner protein (MIP) part of the dynein-decorated doublet microtubules (DMTs) in flagella axoneme. The polypeptide is Protein SPMIP9 (SPMIP9) (Bos taurus (Bovine)).